The chain runs to 880 residues: Valine--tRNA ligase (880 aa).

The short motif at 51 to 61 (PNVTGELHLGH) is the 'HIGH' region element. Positions 529-533 (KMSKT) match the 'KMSKS' region motif. Position 532 (Lys532) interacts with ATP. Positions 815–854 (MSTMVDLEAEAKRVEAEIAELETQIERLSARLSDTQFLAK) form a coiled coil.

It belongs to the class-I aminoacyl-tRNA synthetase family. ValS type 1 subfamily. As to quaternary structure, monomer.

It localises to the cytoplasm. It catalyses the reaction tRNA(Val) + L-valine + ATP = L-valyl-tRNA(Val) + AMP + diphosphate. In terms of biological role, catalyzes the attachment of valine to tRNA(Val). As ValRS can inadvertently accommodate and process structurally similar amino acids such as threonine, to avoid such errors, it has a 'posttransfer' editing activity that hydrolyzes mischarged Thr-tRNA(Val) in a tRNA-dependent manner. The sequence is that of Valine--tRNA ligase from Dehalococcoides mccartyi (strain ATCC BAA-2266 / KCTC 15142 / 195) (Dehalococcoides ethenogenes (strain 195)).